A 576-amino-acid polypeptide reads, in one-letter code: Sulfite reductase [NADPH] hemoprotein beta-component (576 aa).

Over residues 1–12 (MDAKTQPDRSRD) the composition is skewed to basic and acidic residues. Residues 1–26 (MDAKTQPDRSRDVSQPLDKLGPDETL) are disordered. [4Fe-4S] cluster-binding residues include cysteine 441, cysteine 447, cysteine 486, and cysteine 490. Position 490 (cysteine 490) interacts with siroheme.

It belongs to the nitrite and sulfite reductase 4Fe-4S domain family. Alpha(8)-beta(8). The alpha component is a flavoprotein, the beta component is a hemoprotein. Siroheme serves as cofactor. [4Fe-4S] cluster is required as a cofactor.

The catalysed reaction is hydrogen sulfide + 3 NADP(+) + 3 H2O = sulfite + 3 NADPH + 4 H(+). It participates in sulfur metabolism; hydrogen sulfide biosynthesis; hydrogen sulfide from sulfite (NADPH route): step 1/1. Component of the sulfite reductase complex that catalyzes the 6-electron reduction of sulfite to sulfide. This is one of several activities required for the biosynthesis of L-cysteine from sulfate. In Nitrobacter winogradskyi (strain ATCC 25391 / DSM 10237 / CIP 104748 / NCIMB 11846 / Nb-255), this protein is Sulfite reductase [NADPH] hemoprotein beta-component.